Here is a 974-residue protein sequence, read N- to C-terminus: Translation initiation factor IF-2 (974 aa).

Disordered regions lie at residues 67–86 (TRKH…ARTI), 101–133 (DVAE…RREA), and 146–385 (RQER…TFQA). The span at 105-114 (GAEQGQAQVA) shows a compositional bias: low complexity. 2 stretches are compositionally biased toward basic and acidic residues: residues 121–133 (ELKR…RREA) and 146–181 (RQER…KRAA). Positions 182–197 (AEAAAAQQAAAQQAAE) are enriched in low complexity. Basic and acidic residues predominate over residues 210–261 (EEARAAAERAAQREAAKKAEDAAREAADKARAEQEEIRKRREAAEAEARAIR). Positions 313-329 (PAGATPATTQAPAAGAG) are enriched in low complexity. A compositionally biased stretch (gly residues) spans 358 to 371 (SSGGVDRGWRGGPK). The tr-type G domain maps to 474 to 643 (PRPPVVTVMG…LLQAEVLELK (170 aa)). Positions 483-490 (GHVDHGKT) are G1. 483–490 (GHVDHGKT) serves as a coordination point for GTP. The tract at residues 508-512 (GITQH) is G2. The G3 stretch occupies residues 529 to 532 (DTPG). GTP is bound by residues 529-533 (DTPGH) and 583-586 (NKID). The tract at residues 583–586 (NKID) is G4. The segment at 619–621 (SAK) is G5.

Belongs to the TRAFAC class translation factor GTPase superfamily. Classic translation factor GTPase family. IF-2 subfamily.

It localises to the cytoplasm. In terms of biological role, one of the essential components for the initiation of protein synthesis. Protects formylmethionyl-tRNA from spontaneous hydrolysis and promotes its binding to the 30S ribosomal subunits. Also involved in the hydrolysis of GTP during the formation of the 70S ribosomal complex. This Burkholderia vietnamiensis (strain G4 / LMG 22486) (Burkholderia cepacia (strain R1808)) protein is Translation initiation factor IF-2.